Consider the following 208-residue polypeptide: MNVNVINHPLVRHKLTLMREADCSTYKFRTLTTELARLMAYEASRDFEIEKYLIDGWCGQIEGDRIKGKTLTVVPILRAGLGMLDGVLDLIPTAKISVVGLQRDEETLKPISYFEKFVDSMDERPALIIDPMLATGGSMVATIDLLKEKGCRNIKALVLVAAPEGVKAVNDAHPDVTIYTAALDSRLNENGYIIPGLGDAGDKIFGTR.

Residues R78, R103, and 130–138 (DPMLATGGS) contribute to the 5-phospho-alpha-D-ribose 1-diphosphate site. Uracil contacts are provided by residues I193 and 198–200 (GDA). D199 contacts 5-phospho-alpha-D-ribose 1-diphosphate.

Belongs to the UPRTase family. Mg(2+) is required as a cofactor.

The catalysed reaction is UMP + diphosphate = 5-phospho-alpha-D-ribose 1-diphosphate + uracil. It functions in the pathway pyrimidine metabolism; UMP biosynthesis via salvage pathway; UMP from uracil: step 1/1. Its activity is regulated as follows. Allosterically activated by GTP. Functionally, catalyzes the conversion of uracil and 5-phospho-alpha-D-ribose 1-diphosphate (PRPP) to UMP and diphosphate. This is Uracil phosphoribosyltransferase from Neisseria gonorrhoeae (strain ATCC 700825 / FA 1090).